Consider the following 843-residue polypeptide: Ribosome biogenesis protein ERB1 (843 aa).

2 disordered regions span residues 36 to 189 (KKAA…RYIY) and 364 to 419 (ADES…REYL). 3 stretches are compositionally biased toward acidic residues: residues 77-92 (VDED…YDLE), 106-139 (SDSE…EVPS), and 163-172 (ESNDLSDDNE). Over residues 173 to 183 (PNYRIEKDANG) the composition is skewed to basic and acidic residues. Over residues 379-396 (PKLPPPGYEESYHPPPEY) the composition is skewed to pro residues. The segment covering 397–406 (LPDKKEKEEW) has biased composition (basic and acidic residues). WD repeat units lie at residues 487–526 (GHRG…QLWS), 530–570 (SDED…LELE), 668–706 (KGGG…LVKI), 709–754 (PGAR…RPYK), 758–797 (YHQK…DLLS), and 813–843 (TGDL…RLWM).

The protein belongs to the WD repeat BOP1/ERB1 family. In terms of assembly, component of the NOP7 complex, composed of ERB1, NOP7 and YTM1. The complex is held together by ERB1, which interacts with NOP7 via its N-terminal domain and with YTM1 via a high-affinity interaction between the seven-bladed beta-propeller domains of the 2 proteins. The NOP7 complex associates with the 66S pre-ribosome.

Its subcellular location is the nucleus. It is found in the nucleolus. The protein localises to the nucleoplasm. Functionally, component of the NOP7 complex, which is required for maturation of the 25S and 5.8S ribosomal RNAs and formation of the 60S ribosome. This chain is Ribosome biogenesis protein ERB1, found in Coccidioides immitis (strain RS) (Valley fever fungus).